Reading from the N-terminus, the 275-residue chain is Putative ankyrin repeat protein L715 (275 aa).

ANK repeat units lie at residues 94–123, 124–153, 155–183, and 184–213; these read NINY…DINY, NNGL…NTND, IFQL…SIDP, and IYST…SDST. The disordered stretch occupies residues 253–275; sequence NQDESDVGDDAENDIENDIEDDN. A compositionally biased stretch (acidic residues) spans 255–275; sequence DESDVGDDAENDIENDIEDDN.

The protein is Putative ankyrin repeat protein L715 of Acanthamoeba polyphaga mimivirus (APMV).